Consider the following 209-residue polypeptide: ATP-dependent Clp protease proteolytic subunit (209 aa).

Ser-111 serves as the catalytic Nucleophile. Residue His-136 is part of the active site.

The protein belongs to the peptidase S14 family. In terms of assembly, fourteen ClpP subunits assemble into 2 heptameric rings which stack back to back to give a disk-like structure with a central cavity, resembling the structure of eukaryotic proteasomes.

The protein resides in the cytoplasm. The catalysed reaction is Hydrolysis of proteins to small peptides in the presence of ATP and magnesium. alpha-casein is the usual test substrate. In the absence of ATP, only oligopeptides shorter than five residues are hydrolyzed (such as succinyl-Leu-Tyr-|-NHMec, and Leu-Tyr-Leu-|-Tyr-Trp, in which cleavage of the -Tyr-|-Leu- and -Tyr-|-Trp bonds also occurs).. Cleaves peptides in various proteins in a process that requires ATP hydrolysis. Has a chymotrypsin-like activity. Plays a major role in the degradation of misfolded proteins. This Dechloromonas aromatica (strain RCB) protein is ATP-dependent Clp protease proteolytic subunit.